A 209-amino-acid polypeptide reads, in one-letter code: Urease accessory protein UreG (209 aa).

A GTP-binding site is contributed by 14–21 (GPVGSGKT).

The protein belongs to the SIMIBI class G3E GTPase family. UreG subfamily. Homodimer. UreD, UreF and UreG form a complex that acts as a GTP-hydrolysis-dependent molecular chaperone, activating the urease apoprotein by helping to assemble the nickel containing metallocenter of UreC. The UreE protein probably delivers the nickel.

It localises to the cytoplasm. Facilitates the functional incorporation of the urease nickel metallocenter. This process requires GTP hydrolysis, probably effectuated by UreG. The chain is Urease accessory protein UreG from Rhodopseudomonas palustris (strain ATCC BAA-98 / CGA009).